The following is a 320-amino-acid chain: 1-aminocyclopropane-1-carboxylate oxidase 3 (320 aa).

Positions 111 to 131 (NEYRLAMKDFGKRLEILAEEL) form a coiled coil. Residues 155 to 256 (GPTFATKLSN…RMSIASFYNP (102 aa)) form the Fe2OG dioxygenase domain. Fe cation is bound by residues His180, Asp182, and His237. Arg247 lines the 2-oxoglutarate pocket.

Belongs to the iron/ascorbate-dependent oxidoreductase family. It depends on Fe(2+) as a cofactor.

It catalyses the reaction 1-aminocyclopropane-1-carboxylate + L-ascorbate + O2 = ethene + L-dehydroascorbate + hydrogen cyanide + CO2 + 2 H2O. Its pathway is alkene biosynthesis; ethylene biosynthesis via S-adenosyl-L-methionine; ethylene from S-adenosyl-L-methionine: step 2/2. In terms of biological role, enzyme involved in the ethylene biosynthesis. May promote stem elongation by maximizing the extensibility cells, possibly by activating ethylene biosynthesis, in response to very-long-chain fatty acids (VLCFAs C20:0 to C30:0). This chain is 1-aminocyclopropane-1-carboxylate oxidase 3, found in Arabidopsis thaliana (Mouse-ear cress).